Consider the following 152-residue polypeptide: Nucleoside diphosphate kinase (152 aa).

Positions 11, 59, 87, 93, 104, and 114 each coordinate ATP. The active-site Pros-phosphohistidine intermediate is the histidine 117.

It belongs to the NDK family. In terms of assembly, homotetramer. It depends on Mg(2+) as a cofactor.

The protein resides in the cytoplasm. It carries out the reaction dZDP + ATP = dZTP + ADP. It catalyses the reaction a 2'-deoxyribonucleoside 5'-diphosphate + ATP = a 2'-deoxyribonucleoside 5'-triphosphate + ADP. The enzyme catalyses a ribonucleoside 5'-diphosphate + ATP = a ribonucleoside 5'-triphosphate + ADP. The protein operates within purine metabolism. Its function is as follows. Major role in the synthesis of nucleoside triphosphates other than ATP. The ATP gamma phosphate is transferred to the NDP beta phosphate via a ping-pong mechanism, using a phosphorylated active-site intermediate. Functionally, (Microbial infection) Catalyzes the phosphorylation of dZDP to dZTP, when the bacterium is infected by a phage that produces the substrate for the synthesis of dZTP (2- amino-2'-deoxyadenosine 5'-triphosphate), which is then used by the phage as a DNA polymerase substrate. The sequence is that of Nucleoside diphosphate kinase from Synechococcus sp. (strain CC9311).